The chain runs to 417 residues: 2-oxoglutarate and iron-dependent oxygenase JMJD4 (417 aa).

A JmjC domain is found at 142-301 (CRDFPVEDVF…NMWRFLQQEL (160 aa)). Residues histidine 189, aspartate 191, and histidine 269 each coordinate Fe cation.

This sequence belongs to the JMJD6 family. In terms of assembly, interacts with ETF1. Interacts with the ETF1-GSPT1 complex. The cofactor is Fe(2+).

It is found in the cytoplasm. It carries out the reaction L-lysyl-[protein] + 2-oxoglutarate + O2 = 4-hydroxy-L-lysyl-[protein] + succinate + CO2. Functionally, catalyzes the 2-oxoglutarate and iron-dependent C4-lysyl hydroxylation of ETF1 at 'Lys-63' thereby promoting the translational termination efficiency of ETF1. The chain is 2-oxoglutarate and iron-dependent oxygenase JMJD4 (JMJD4) from Homo sapiens (Human).